A 582-amino-acid polypeptide reads, in one-letter code: Heterogeneous nuclear ribonucleoprotein C homolog (582 aa).

The segment at 1–21 is disordered; the sequence is MSEALETGDPSPPPPIVSENG. C2H2-type zinc fingers lie at residues 102-125, 130-154, and 213-235; these read YYCCLCNRPYKTHATLTAHLRGYH, SSCDEPGCNFLSFTDQEKKRHRRTH, and YACLKCPHSVFNAYHAARHVEMH.

It is found in the nucleus. This Caenorhabditis elegans protein is Heterogeneous nuclear ribonucleoprotein C homolog.